The following is a 363-amino-acid chain: MIIDLTEIQDIHFFFRLEFFKEIYEILWVFVPILIFIVGITISVLAIVWLEREISAGIQQRIGPEYTGPFGVLQALADGTKLLFKENLIPSRGDIRLFSFGPAISVISIILSYSVIPFGYNFVLSDLNIGVFLWIAISSIAPIGLLMSGYGSNNKYSFLGGLRAAAQSISYEIPLTLCVLSISLLSNSLSTVDIVDAQSKYGFWGWNLWRQPMGFLVFLISSLAECERLPFDLPEAEEELIAGYQTEYSGIKFGLFYVASYLNLLVSSLFVTVLYLGGSNISIPYIFVSNFFEINKTYGVFVTIIGIFITLVKTFLFIFVSITTRWTLPRLRIDQLLNLGWKFLLPISLGNLLLTTSSQLFSL.

Helical transmembrane passes span 28-48, 98-118, 129-149, 253-273, 300-320, and 336-356; these read WVFVPILIFIVGITISVLAIV, FSFGPAISVISIILSYSVIPF, IGVFLWIAISSIAPIGLLMSG, FGLFYVASYLNLLVSSLFVTV, VFVTIIGIFITLVKTFLFIFV, and LLNLGWKFLLPISLGNLLLTT.

The protein belongs to the complex I subunit 1 family. As to quaternary structure, NDH is composed of at least 16 different subunits, 5 of which are encoded in the nucleus.

It localises to the plastid. Its subcellular location is the chloroplast thylakoid membrane. It catalyses the reaction a plastoquinone + NADH + (n+1) H(+)(in) = a plastoquinol + NAD(+) + n H(+)(out). It carries out the reaction a plastoquinone + NADPH + (n+1) H(+)(in) = a plastoquinol + NADP(+) + n H(+)(out). NDH shuttles electrons from NAD(P)H:plastoquinone, via FMN and iron-sulfur (Fe-S) centers, to quinones in the photosynthetic chain and possibly in a chloroplast respiratory chain. The immediate electron acceptor for the enzyme in this species is believed to be plastoquinone. Couples the redox reaction to proton translocation, and thus conserves the redox energy in a proton gradient. The protein is NAD(P)H-quinone oxidoreductase subunit 1, chloroplastic of Phaseolus vulgaris (Kidney bean).